A 192-amino-acid polypeptide reads, in one-letter code: Cytidylate kinase (192 aa).

ATP is bound at residue 7 to 15 (GPPGSGKST).

It belongs to the cytidylate kinase family. Type 2 subfamily.

The protein resides in the cytoplasm. It carries out the reaction CMP + ATP = CDP + ADP. The enzyme catalyses dCMP + ATP = dCDP + ADP. This is Cytidylate kinase from Halorubrum lacusprofundi (strain ATCC 49239 / DSM 5036 / JCM 8891 / ACAM 34).